The primary structure comprises 255 residues: Thiazole synthase (255 aa).

The active-site Schiff-base intermediate with DXP is lysine 96. Residues glycine 157, 183–184 (AG), and 205–206 (NT) contribute to the 1-deoxy-D-xylulose 5-phosphate site.

The protein belongs to the ThiG family. In terms of assembly, homotetramer. Forms heterodimers with either ThiH or ThiS.

The protein resides in the cytoplasm. The enzyme catalyses [ThiS sulfur-carrier protein]-C-terminal-Gly-aminoethanethioate + 2-iminoacetate + 1-deoxy-D-xylulose 5-phosphate = [ThiS sulfur-carrier protein]-C-terminal Gly-Gly + 2-[(2R,5Z)-2-carboxy-4-methylthiazol-5(2H)-ylidene]ethyl phosphate + 2 H2O + H(+). It functions in the pathway cofactor biosynthesis; thiamine diphosphate biosynthesis. Catalyzes the rearrangement of 1-deoxy-D-xylulose 5-phosphate (DXP) to produce the thiazole phosphate moiety of thiamine. Sulfur is provided by the thiocarboxylate moiety of the carrier protein ThiS. In vitro, sulfur can be provided by H(2)S. The polypeptide is Thiazole synthase (Geobacillus thermodenitrificans (strain NG80-2)).